The following is a 183-amino-acid chain: Acireductone dioxygenase (183 aa).

Residues His-95, His-97, Glu-101, and His-139 each coordinate Fe(2+). His-95, His-97, Glu-101, and His-139 together coordinate Ni(2+).

This sequence belongs to the acireductone dioxygenase (ARD) family. In terms of assembly, monomer. Fe(2+) serves as cofactor. It depends on Ni(2+) as a cofactor.

It carries out the reaction 1,2-dihydroxy-5-(methylsulfanyl)pent-1-en-3-one + O2 = 3-(methylsulfanyl)propanoate + CO + formate + 2 H(+). The enzyme catalyses 1,2-dihydroxy-5-(methylsulfanyl)pent-1-en-3-one + O2 = 4-methylsulfanyl-2-oxobutanoate + formate + 2 H(+). It functions in the pathway amino-acid biosynthesis; L-methionine biosynthesis via salvage pathway; L-methionine from S-methyl-5-thio-alpha-D-ribose 1-phosphate: step 5/6. Catalyzes 2 different reactions between oxygen and the acireductone 1,2-dihydroxy-3-keto-5-methylthiopentene (DHK-MTPene) depending upon the metal bound in the active site. Fe-containing acireductone dioxygenase (Fe-ARD) produces formate and 2-keto-4-methylthiobutyrate (KMTB), the alpha-ketoacid precursor of methionine in the methionine recycle pathway. Ni-containing acireductone dioxygenase (Ni-ARD) produces methylthiopropionate, carbon monoxide and formate, and does not lie on the methionine recycle pathway. The chain is Acireductone dioxygenase from Hydrogenobaculum sp. (strain Y04AAS1).